Reading from the N-terminus, the 427-residue chain is Serine hydroxymethyltransferase (427 aa).

Residue 122–124 participates in (6S)-5,6,7,8-tetrahydrofolate binding; the sequence is GHI. K228 carries the N6-(pyridoxal phosphate)lysine modification.

It belongs to the SHMT family. In terms of assembly, homodimer. Pyridoxal 5'-phosphate serves as cofactor.

The protein localises to the cytoplasm. It functions in the pathway amino-acid biosynthesis; glycine biosynthesis; glycine from L-serine: step 1/1. In terms of biological role, catalyzes the reversible interconversion of serine and glycine with a modified folate serving as the one-carbon carrier. Also exhibits a pteridine-independent aldolase activity toward beta-hydroxyamino acids, producing glycine and aldehydes, via a retro-aldol mechanism. This is Serine hydroxymethyltransferase from Thermococcus onnurineus (strain NA1).